We begin with the raw amino-acid sequence, 358 residues long: Replication-associated protein (358 aa).

In terms of domain architecture, CRESS-DNA virus Rep endonuclease spans 8–116 (RIQAKNIFLT…DGDTIEWGEF (109 aa)). Residues 15–18 (FLTY) carry the RCR-1 motif. Glu49, His57, and His59 together coordinate a divalent metal cation. Positions 57–59 (HLH) match the RCR-2 motif. The active-site For DNA cleavage activity is the Tyr103. The RCR-3 motif lies at 103–106 (YVDK). Asp107 is a binding site for a divalent metal cation. Residues 143-153 (LEQALQILKEE) form a binding to RBR1 region. An oligomerization region spans residues 156 to 176 (KDYFLQHHNLLNNAQKIFQRA). 222–229 (GDSRTGKT) lines the ATP pocket.

This sequence belongs to the geminiviridae Rep protein family. As to quaternary structure, homooligomer. Interacts with the replication enhancer protein (REn). Interacts with host retinoblastoma-related protein 1 (RBR1), and may thereby induce the transcription of host replicative enzymes even if the cell is not dividing anymore. Interacts with host PCNA. Interacts with host SCE1 protein. Requires Mg(2+) as cofactor. Mn(2+) is required as a cofactor.

It localises to the host nucleus. Functionally, essential for the replication of viral ssDNA. The closed circular ssDNA genome is first converted to a superhelical dsDNA. Rep binds a specific region at the genome origin of replication. It introduces an endonucleolytic nick within the conserved sequence 5'-TAATATTAC-3' in the intergenic region of the genome present in all geminiviruses, thereby initiating the rolling circle replication (RCR). Following cleavage, binds covalently to the 5'-phosphate of DNA as a tyrosyl ester. The cleavage gives rise to a free 3'-OH that serves as a primer for the cellular DNA polymerase. The polymerase synthesizes the (+) strand DNA by rolling circle mechanism. After one round of replication, a Rep-catalyzed nucleotidyl transfer reaction releases a circular single-stranded virus genome, thereby terminating the replication. Displays origin-specific DNA cleavage, nucleotidyl transferase, ATPase and helicase activities. This is Replication-associated protein from Beet curly top virus (strain California/Logan) (BCTV).